The chain runs to 518 residues: Voltage-gated potassium channel regulatory subunit KCNG2 (518 aa).

The Cytoplasmic segment spans residues 1–214 (MALLTGNADR…DMVENPHSGI (214 aa)). A helical transmembrane segment spans residues 215 to 236 (PGKIFACISISFVAITAVSLCI). Over 237–257 (STMPDVREEEDRGECSQKCYD) the chain is Extracellular. A helical membrane pass occupies residues 258–279 (IFVLETVCVAWFSFEFLLRSIQ). Residues 280 to 290 (AENKCAFLKTP) lie on the Cytoplasmic side of the membrane. The helical transmembrane segment at 291 to 311 (LNIIDILAILPFYISLIVDMA) threads the bilayer. Over 312–331 (STKNSSKPGGGAGNKYLERV) the chain is Extracellular. The helical; Voltage-sensor transmembrane segment at 332–352 (GLVLRFLRALRILYVMRLARH) threads the bilayer. At 353 to 367 (SLGLQTLGLTVRRCT) the chain is on the cytoplasmic side. A helical transmembrane segment spans residues 368–389 (REFGLLLLFLCVAMALFSPLVY). The Extracellular segment spans residues 390–404 (LAESELGAKQEFTSI). An intramembrane region (helical) is located at residues 405-416 (PTSYWWAVISMT). The Selectivity filter signature appears at 417-422 (TVGYGD). Residues 417 to 424 (TVGYGDMV) lie within the membrane without spanning it. Residues 425 to 431 (PRSIPGQ) are Extracellular-facing. The chain crosses the membrane as a helical span at residues 432-460 (VVALSSILSGILLMAFPVTSIFHTFSRSY). Residues 461 to 518 (SELKEQQQRAASRQMHQLEESTKLAGGGSSQWITAASPPDAAREDGRPELDQEAKRSC) are Cytoplasmic-facing. The interval 473–518 (RQMHQLEESTKLAGGGSSQWITAASPPDAAREDGRPELDQEAKRSC) is disordered. Basic and acidic residues predominate over residues 501-518 (AAREDGRPELDQEAKRSC).

It belongs to the potassium channel family. G (TC 1.A.1.2) subfamily. Kv6.2/KCNG2 sub-subfamily. In terms of assembly, heterodimer with KCNB1.

It localises to the cell membrane. Regulatory alpha-subunit of the voltage-gated potassium (Kv) channel which, when coassembled with KCNB1, can modulate the kinetics and conductance-voltage relationship. Modulates channel activity by shifting the threshold and the half-maximal activation to more negative values. Potassium channel subunit that does not form functional channels by itself. The protein is Voltage-gated potassium channel regulatory subunit KCNG2 of Gallus gallus (Chicken).